We begin with the raw amino-acid sequence, 473 residues long: Tryptophanase (473 aa).

Lys-270 carries the post-translational modification N6-(pyridoxal phosphate)lysine.

The protein belongs to the beta-eliminating lyase family. Homotetramer. Pyridoxal 5'-phosphate is required as a cofactor.

It carries out the reaction L-tryptophan + H2O = indole + pyruvate + NH4(+). Its pathway is amino-acid degradation; L-tryptophan degradation via pyruvate pathway; indole and pyruvate from L-tryptophan: step 1/1. The chain is Tryptophanase from Vibrio vulnificus (strain CMCP6).